The primary structure comprises 556 residues: 2-succinyl-5-enolpyruvyl-6-hydroxy-3-cyclohexene-1-carboxylate synthase (556 aa).

This sequence belongs to the TPP enzyme family. MenD subfamily. As to quaternary structure, homodimer. Mg(2+) serves as cofactor. Mn(2+) is required as a cofactor. Requires thiamine diphosphate as cofactor.

The catalysed reaction is isochorismate + 2-oxoglutarate + H(+) = 5-enolpyruvoyl-6-hydroxy-2-succinyl-cyclohex-3-ene-1-carboxylate + CO2. It participates in quinol/quinone metabolism; 1,4-dihydroxy-2-naphthoate biosynthesis; 1,4-dihydroxy-2-naphthoate from chorismate: step 2/7. Its pathway is quinol/quinone metabolism; menaquinone biosynthesis. Its function is as follows. Catalyzes the thiamine diphosphate-dependent decarboxylation of 2-oxoglutarate and the subsequent addition of the resulting succinic semialdehyde-thiamine pyrophosphate anion to isochorismate to yield 2-succinyl-5-enolpyruvyl-6-hydroxy-3-cyclohexene-1-carboxylate (SEPHCHC). In Salmonella paratyphi B (strain ATCC BAA-1250 / SPB7), this protein is 2-succinyl-5-enolpyruvyl-6-hydroxy-3-cyclohexene-1-carboxylate synthase.